The primary structure comprises 275 residues: MSQQLQQIIDNAWDNRADLSPKAAPADVREAVAHAIEQLDKGALRVAEKKDGDWVVNQWLKKAVLLSFRLEDNAPMPAGGYSQFYDKVPSKFANYTAEDFAAGGFRVVPPAIARRGSYIAKNVVLMPSYTNIGAYVDEGTMVDTWATVGSCAQIGKNVHLSGGVGIGGVLEPLQANPVIIEDNCFIGARSEVVEGVIVEENSVISMGVYLGQSTKIYDRETGEVSYGRIPAGSVVVAGNLPSKDGSHSLYCAVIVKKVDAKTRAKVGLNELLRGD.

This sequence belongs to the transferase hexapeptide repeat family.

The protein localises to the cytoplasm. The enzyme catalyses (S)-2,3,4,5-tetrahydrodipicolinate + succinyl-CoA + H2O = (S)-2-succinylamino-6-oxoheptanedioate + CoA. The protein operates within amino-acid biosynthesis; L-lysine biosynthesis via DAP pathway; LL-2,6-diaminopimelate from (S)-tetrahydrodipicolinate (succinylase route): step 1/3. The chain is 2,3,4,5-tetrahydropyridine-2,6-dicarboxylate N-succinyltransferase from Paraburkholderia phymatum (strain DSM 17167 / CIP 108236 / LMG 21445 / STM815) (Burkholderia phymatum).